Here is a 321-residue protein sequence, read N- to C-terminus: Probable arabinan endo-1,5-alpha-L-arabinosidase C (321 aa).

The N-terminal stretch at 1 to 20 (MYLYTLILLFLASVNVNAYA) is a signal peptide. Aspartate 33 functions as the Proton acceptor in the catalytic mechanism. Asparagine 75 and asparagine 192 each carry an N-linked (GlcNAc...) asparagine glycan. Glutamate 200 (proton donor) is an active-site residue. An N-linked (GlcNAc...) asparagine glycan is attached at asparagine 224.

It belongs to the glycosyl hydrolase 43 family.

It is found in the secreted. The catalysed reaction is Endohydrolysis of (1-&gt;5)-alpha-arabinofuranosidic linkages in (1-&gt;5)-arabinans.. It participates in glycan metabolism; L-arabinan degradation. Endo-1,5-alpha-L-arabinanase involved in degradation of pectin. Its preferred substrate is linear 1,5-alpha-L-arabinan. This chain is Probable arabinan endo-1,5-alpha-L-arabinosidase C (abnC), found in Neosartorya fischeri (strain ATCC 1020 / DSM 3700 / CBS 544.65 / FGSC A1164 / JCM 1740 / NRRL 181 / WB 181) (Aspergillus fischerianus).